We begin with the raw amino-acid sequence, 328 residues long: MAIIHFTKVHGSQNDFFLVDEEENHITAWSDTKRADFAIKLCDRSHSLGGADGILYVAKSNKAGAIGQMRVVNSDGSIASMCGNGLRTVARYLLEKHALTDAKVETMKAILDVRKATSLGFDIPTYQVEISPVKFNPESLPMYVGVEKLFNQVIPELDEELAFSAVSVPNPHLITFVDQTVLDSDKQEKLASFLNSENPYFPDGVNVSFVKRLNEDAIYVRTFERGVGFTNACGTAMSACSLIKKMLDQDTLETPLNVYNDGGRVQVTAKKDETGDISLQLIGNATFVSTGSVRYDDIVTELTNEATVEQAQYQELVQEVKHFLKTTG.

Substrate-binding residues include Asn14 and Asn73. The active-site Proton donor is Cys82. Substrate is bound by residues 83-84 (GN), Asn170, Asn206, and 224-225 (ER). Cys233 functions as the Proton acceptor in the catalytic mechanism. Substrate is bound at residue 234–235 (GT).

This sequence belongs to the diaminopimelate epimerase family. As to quaternary structure, homodimer.

The protein localises to the cytoplasm. The enzyme catalyses (2S,6S)-2,6-diaminopimelate = meso-2,6-diaminopimelate. It participates in amino-acid biosynthesis; L-lysine biosynthesis via DAP pathway; DL-2,6-diaminopimelate from LL-2,6-diaminopimelate: step 1/1. In terms of biological role, catalyzes the stereoinversion of LL-2,6-diaminopimelate (L,L-DAP) to meso-diaminopimelate (meso-DAP), a precursor of L-lysine and an essential component of the bacterial peptidoglycan. This Listeria welshimeri serovar 6b (strain ATCC 35897 / DSM 20650 / CCUG 15529 / CIP 8149 / NCTC 11857 / SLCC 5334 / V8) protein is Diaminopimelate epimerase.